A 345-amino-acid polypeptide reads, in one-letter code: Probable aldo-keto reductase 3 (345 aa).

The active-site Proton donor is the tyrosine 63. A substrate-binding site is contributed by histidine 130. 209–219 (SPLGRGFFASG) contacts NADP(+).

This sequence belongs to the aldo/keto reductase family.

In Arabidopsis thaliana (Mouse-ear cress), this protein is Probable aldo-keto reductase 3.